Consider the following 91-residue polypeptide: DNA-directed RNA polymerase subunit omega (91 aa).

It belongs to the RNA polymerase subunit omega family. The RNAP catalytic core consists of 2 alpha, 1 beta, 1 beta' and 1 omega subunit. When a sigma factor is associated with the core the holoenzyme is formed, which can initiate transcription.

The catalysed reaction is RNA(n) + a ribonucleoside 5'-triphosphate = RNA(n+1) + diphosphate. Functionally, promotes RNA polymerase assembly. Latches the N- and C-terminal regions of the beta' subunit thereby facilitating its interaction with the beta and alpha subunits. This is DNA-directed RNA polymerase subunit omega from Actinobacillus pleuropneumoniae serotype 5b (strain L20).